Reading from the N-terminus, the 113-residue chain is Cell cycle protein GpsB (113 aa).

Residues 32–71 are a coiled coil; sequence LDNVIKDYESFTKDNQQLSDENERLRAKVDELTKQVAVGA.

It belongs to the GpsB family. In terms of assembly, forms polymers through the coiled coil domains. Interacts with PBP1, MreC and EzrA.

Its subcellular location is the cytoplasm. Divisome component that associates with the complex late in its assembly, after the Z-ring is formed, and is dependent on DivIC and PBP2B for its recruitment to the divisome. Together with EzrA, is a key component of the system that regulates PBP1 localization during cell cycle progression. Its main role could be the removal of PBP1 from the cell pole after pole maturation is completed. Also contributes to the recruitment of PBP1 to the division complex. Not essential for septum formation. This chain is Cell cycle protein GpsB, found in Lactiplantibacillus plantarum (strain ATCC BAA-793 / NCIMB 8826 / WCFS1) (Lactobacillus plantarum).